The chain runs to 331 residues: Putative NAD(P)H nitroreductase acg (331 aa).

FMN contacts are provided by residues 28–32 (QPWRW) and Arg-316.

This sequence belongs to the nitroreductase family. FMN serves as cofactor.

The chain is Putative NAD(P)H nitroreductase acg (acg) from Mycobacterium tuberculosis (strain CDC 1551 / Oshkosh).